The chain runs to 408 residues: Putative glutamate--cysteine ligase 2 (408 aa).

The protein belongs to the glutamate--cysteine ligase type 2 family. YbdK subfamily.

The enzyme catalyses L-cysteine + L-glutamate + ATP = gamma-L-glutamyl-L-cysteine + ADP + phosphate + H(+). Functionally, ATP-dependent carboxylate-amine ligase which exhibits weak glutamate--cysteine ligase activity. The polypeptide is Putative glutamate--cysteine ligase 2 (Bradyrhizobium sp. (strain ORS 278)).